Consider the following 749-residue polypeptide: Catalase-peroxidase (749 aa).

Residues 1 to 12 (MSSDTSDTRPPH) show a composition bias toward basic and acidic residues. The tract at residues 1–40 (MSSDTSDTRPPHSDSGTQSNSESENPIIDSPEPKAHAPLT) is disordered. A compositionally biased stretch (polar residues) spans 14 to 24 (DSGTQSNSESE). A cross-link (tryptophyl-tyrosyl-methioninium (Trp-Tyr) (with M-266)) is located at residues 113–240 (WHAAGTYRIF…FGATTMGLIY (128 aa)). Catalysis depends on His114, which acts as the Proton acceptor. The segment at residues 240-266 (YVNPEGPEGKPDPLAAAHDIRETFGRM) is a cross-link (tryptophyl-tyrosyl-methioninium (Tyr-Met) (with W-113)). Residue His281 participates in heme b binding.

Belongs to the peroxidase family. Peroxidase/catalase subfamily. As to quaternary structure, homodimer or homotetramer. The cofactor is heme b. In terms of processing, formation of the three residue Trp-Tyr-Met cross-link is important for the catalase, but not the peroxidase activity of the enzyme.

It carries out the reaction H2O2 + AH2 = A + 2 H2O. The catalysed reaction is 2 H2O2 = O2 + 2 H2O. Functionally, bifunctional enzyme with both catalase and broad-spectrum peroxidase activity. The chain is Catalase-peroxidase from Mycobacterium sp. (strain JLS).